A 1374-amino-acid polypeptide reads, in one-letter code: Probable multidrug resistance-associated protein lethal(2)03659 (1374 aa).

Residues 1–40 (MDKQPVLEPTFDSVSERENTSIEESSLLENNGFDHRNKDE) form a disordered region. 6 helical membrane passes run 159-179 (LLRV…VVEL), 205-225 (AGFY…MILT), 282-302 (YTVH…YLMY), 305-325 (IGIS…IQMY), 404-424 (IFLS…EIAF), and 426-446 (ITAY…SAII). An ABC transmembrane type-1 1 domain is found at 168 to 449 (GFPGLAIFVV…YVPSAIIQTA (282 aa)). The disordered stretch occupies residues 466–492 (ELGSSDKSEGPSKDTVPGNPPSNNNEA). Residues 499 to 722 (ISIRDLKAKW…GLITGLGSLS (224 aa)) form the ABC transporter 1 domain. 534–541 (GLTGSGKS) contacts ATP. A glycan (N-linked (GlcNAc...) asparagine) is linked at N561. Residues 723–766 (KTDKAKTEEQEPLNLNSPDNKNEVTPIKENSEQTVGGSSSGKEH) form a disordered region. 5 consecutive transmembrane segments (helical) span residues 787–807 (GGGL…QVAV), 845–865 (LIII…FNIA), 913–933 (VVLV…IVIA), 938–958 (LLLV…NLYL), and 1025–1045 (YCMN…FFAF). Residues 793 to 1079 (FLVMLSSSVL…GVRQTAELEN (287 aa)) enclose the ABC transmembrane type-1 2 domain. One can recognise an ABC transporter 2 domain in the interval 1119–1352 (FKELNLRYTP…SDSKVFHNLV (234 aa)). 1153-1160 (GRTGAGKS) is a binding site for ATP. N-linked (GlcNAc...) asparagine glycans are attached at residues N1254 and N1353.

Belongs to the ABC transporter superfamily. ABCC family. Conjugate transporter (TC 3.A.1.208) subfamily. Uniform expression in embryos.

The protein resides in the membrane. Vital for development. This is Probable multidrug resistance-associated protein lethal(2)03659 (l(2)03659) from Drosophila melanogaster (Fruit fly).